A 345-amino-acid polypeptide reads, in one-letter code: N-acetyl-gamma-glutamyl-phosphate reductase (345 aa).

Residue C149 is part of the active site.

Belongs to the NAGSA dehydrogenase family. Type 1 subfamily.

The protein resides in the cytoplasm. The catalysed reaction is N-acetyl-L-glutamate 5-semialdehyde + phosphate + NADP(+) = N-acetyl-L-glutamyl 5-phosphate + NADPH + H(+). Its pathway is amino-acid biosynthesis; L-arginine biosynthesis; N(2)-acetyl-L-ornithine from L-glutamate: step 3/4. Functionally, catalyzes the NADPH-dependent reduction of N-acetyl-5-glutamyl phosphate to yield N-acetyl-L-glutamate 5-semialdehyde. This is N-acetyl-gamma-glutamyl-phosphate reductase from Desulforapulum autotrophicum (strain ATCC 43914 / DSM 3382 / VKM B-1955 / HRM2) (Desulfobacterium autotrophicum).